Here is a 612-residue protein sequence, read N- to C-terminus: Chaperone protein DnaK (612 aa).

The residue at position 174 (threonine 174) is a Phosphothreonine; by autocatalysis. The tract at residues 578–612 (GAQAGAQGQGAAGGQKQDGNVYDADYKVVDDDKKE) is disordered. The span at 601 to 612 (ADYKVVDDDKKE) shows a compositional bias: basic and acidic residues.

This sequence belongs to the heat shock protein 70 family.

Acts as a chaperone. This is Chaperone protein DnaK from Moorella thermoacetica (strain ATCC 39073 / JCM 9320).